The sequence spans 831 residues: Heat shock 70 kDa protein 15 (831 aa).

2 disordered regions span residues 502 to 579 (EEEV…KKKV) and 784 to 831 (IMTK…EGST). Residues 512 to 526 (DQSEETAKMDTDKAS) are compositionally biased toward basic and acidic residues. A phosphoserine mark is found at Ser-533 and Ser-536. The span at 787 to 800 (KPKPAAKAEAPQAK) shows a compositional bias: low complexity.

This sequence belongs to the heat shock protein 70 (TC 1.A.33) family. HSP110/SSE subfamily.

The protein resides in the cytoplasm. Its subcellular location is the nucleus. Its function is as follows. In cooperation with other chaperones, Hsp70s are key components that facilitate folding of de novo synthesized proteins, assist translocation of precursor proteins into organelles, and are responsible for degradation of damaged protein under stress conditions. The polypeptide is Heat shock 70 kDa protein 15 (HSP70-15) (Arabidopsis thaliana (Mouse-ear cress)).